The sequence spans 62 residues: MDNRLLEILVCPLCKGTLQHDRAHNELICHVDKLAYPIRDGIPVMLADEARQTVEGTPVDPA.

The protein belongs to the UPF0434 family.

The polypeptide is UPF0434 protein RSc2531 (Ralstonia nicotianae (strain ATCC BAA-1114 / GMI1000) (Ralstonia solanacearum)).